The chain runs to 209 residues: Thiamine-phosphate synthase (209 aa).

4-amino-2-methyl-5-(diphosphooxymethyl)pyrimidine contacts are provided by residues Gln-37 to Lys-41 and Asn-69. Mg(2+) is bound by residues Asp-70 and Asp-89. Position 108 (Ser-108) interacts with 4-amino-2-methyl-5-(diphosphooxymethyl)pyrimidine. Position 135–137 (Ser-135–Thr-137) interacts with 2-[(2R,5Z)-2-carboxy-4-methylthiazol-5(2H)-ylidene]ethyl phosphate. Lys-138 serves as a coordination point for 4-amino-2-methyl-5-(diphosphooxymethyl)pyrimidine. 2-[(2R,5Z)-2-carboxy-4-methylthiazol-5(2H)-ylidene]ethyl phosphate contacts are provided by residues Gly-165 and Val-185 to Ser-186.

Belongs to the thiamine-phosphate synthase family. Mg(2+) is required as a cofactor.

It catalyses the reaction 2-[(2R,5Z)-2-carboxy-4-methylthiazol-5(2H)-ylidene]ethyl phosphate + 4-amino-2-methyl-5-(diphosphooxymethyl)pyrimidine + 2 H(+) = thiamine phosphate + CO2 + diphosphate. The enzyme catalyses 2-(2-carboxy-4-methylthiazol-5-yl)ethyl phosphate + 4-amino-2-methyl-5-(diphosphooxymethyl)pyrimidine + 2 H(+) = thiamine phosphate + CO2 + diphosphate. The catalysed reaction is 4-methyl-5-(2-phosphooxyethyl)-thiazole + 4-amino-2-methyl-5-(diphosphooxymethyl)pyrimidine + H(+) = thiamine phosphate + diphosphate. It functions in the pathway cofactor biosynthesis; thiamine diphosphate biosynthesis; thiamine phosphate from 4-amino-2-methyl-5-diphosphomethylpyrimidine and 4-methyl-5-(2-phosphoethyl)-thiazole: step 1/1. Its function is as follows. Condenses 4-methyl-5-(beta-hydroxyethyl)thiazole monophosphate (THZ-P) and 2-methyl-4-amino-5-hydroxymethyl pyrimidine pyrophosphate (HMP-PP) to form thiamine monophosphate (TMP). This Halorhodospira halophila (strain DSM 244 / SL1) (Ectothiorhodospira halophila (strain DSM 244 / SL1)) protein is Thiamine-phosphate synthase.